We begin with the raw amino-acid sequence, 471 residues long: Acetylcholinesterase collagenic tail peptide (471 aa).

The signal sequence occupies residues 1-30 (MLGILLQKATATLASGLNSSRAGMFPIALG). Residues 70 to 86 (CCLLTPPPPPMFPPPFF) are PRAD. 2 Collagen-like domains span residues 118 to 282 (GPPG…SGLP) and 293 to 307 (GPKG…VGRC). 2 disordered regions span residues 140-205 (EIGE…GEKG) and 237-267 (KGVS…IGPP). Low complexity-rich tracts occupy residues 155–164 (VRGPRGMPGS) and 242–251 (APGHRGPVGR). 2 consecutive repeat copies span residues 388–413 (FCGD…TDSC) and 420–443 (YCGD…YHTC). The 2 X 26 AA approximate repeats stretch occupies residues 388–443 (FCGDEIVQVENGEECDDGNRIVTDSCINCKQAYCGDGYLQSGLEECDGKDFGYHTC).

The protein belongs to the COLQ family. As to quaternary structure, the asymmetric form of AChE is a disulfide-bonded oligomer composed of a collagenic subunit (Q) and a variable number of asymmetric (T) catalytic subunits. The N-terminal of the collagenic subunit (Q) associates with the C-terminal of the catalytic subunit (T). As to expression, expressed in electric organs but not in muscle.

It localises to the synapse. In terms of biological role, anchors the catalytic subunits of asymmetric AChE to the synaptic basal lamina. This is Acetylcholinesterase collagenic tail peptide from Torpedo marmorata (Marbled electric ray).